Consider the following 251-residue polypeptide: Triosephosphate isomerase (251 aa).

Residues asparagine 12 and lysine 14 each coordinate substrate. Histidine 96 (electrophile) is an active-site residue. Glutamate 168 serves as the catalytic Proton acceptor.

It belongs to the triosephosphate isomerase family. Homodimer.

It localises to the cytoplasm. It is found in the glycosome. The catalysed reaction is D-glyceraldehyde 3-phosphate = dihydroxyacetone phosphate. The protein operates within carbohydrate biosynthesis; gluconeogenesis. Its pathway is carbohydrate degradation; glycolysis; D-glyceraldehyde 3-phosphate from glycerone phosphate: step 1/1. The protein is Triosephosphate isomerase of Leishmania mexicana.